A 132-amino-acid polypeptide reads, in one-letter code: uncharacterized protein (132 aa).

An N-terminal signal peptide occupies residues 1–25 (MRFTKVVGFLSVLGLAAVFPLTAQA).

This is an uncharacterized protein from Bacillus subtilis (strain 168).